Reading from the N-terminus, the 962-residue chain is AP2-associated protein kinase 1 (962 aa).

At Met1 the chain carries N-acetylmethionine. Basic and acidic residues predominate over residues 1–11; that stretch reads MKKFFDSRREQ. Residues 1–27 form a disordered region; the sequence is MKKFFDSRREQGSSGLGSGSSGGGGSS. The residue at position 14 (Ser14) is a Phosphoserine. Over residues 14 to 27 the composition is skewed to gly residues; sequence SGLGSGSSGGGGSS. The region spanning 46 to 314 is the Protein kinase domain; sequence VTVDEVLAEG…QVSYFSFKLL (269 aa). ATP is bound by residues 52–60 and Lys74; that span reads LAEGGFALV. The active-site Proton acceptor is the Asp176. Tyr234 is modified (phosphotyrosine). Ser235 carries the phosphoserine modification. 2 disordered regions span residues 325 to 515 and 576 to 633; these read NSPI…QFQA and PQAQ…RAGH. A phosphothreonine mark is found at Thr353 and Thr388. At Arg390 the chain carries Omega-N-methylarginine. A compositionally biased stretch (polar residues) spans 397–418; sequence PLPQATGPSNQPSLLASVSQPK. Residues 419 to 434 are compositionally biased toward low complexity; it reads AQATPSQPLQSSQPKQ. Residues 435 to 444 are compositionally biased toward pro residues; it reads PQAPPTPQQT. Thr440 is modified (phosphothreonine). Composition is skewed to low complexity over residues 445 to 485, 498 to 514, and 576 to 606; these read PAPQ…QPQQ, QQQQ…QQFQ, and PQAQ…KVQT. Residue Thr607 is modified to Phosphothreonine. Residues 614–628 are compositionally biased toward polar residues; sequence GQKVGSLTPPSSPKT. Ser619 carries the phosphoserine modification. Phosphothreonine is present on Thr621. Ser624, Ser625, Ser638, and Ser651 each carry phosphoserine. Residue Thr654 is modified to Phosphothreonine. Residues 664–677 are compositionally biased toward low complexity; sequence ASLSKSKSATTTPS. The tract at residues 664–702 is disordered; sequence ASLSKSKSATTTPSGSPRTSQQNVSNASEGSTWNPFDDD. The segment covering 678 to 697 has biased composition (polar residues); it reads GSPRTSQQNVSNASEGSTWN. Residues Ser732, Ser847, Ser938, and Ser939 each carry the phosphoserine modification. Residues 824 to 961 are clathrin-binding domain (CBD); it reads EKADAAVESL…SLLLVDQLID (138 aa). Disordered stretches follow at residues 839-860 and 925-946; these read PPVA…TDSL and LITK…ESSL. The segment covering 846–860 has biased composition (polar residues); the sequence is PSHTESVTSNRTDSL. The segment covering 932-945 has biased composition (low complexity); the sequence is GGHSRNSSGSSESS.

This sequence belongs to the protein kinase superfamily. Ser/Thr protein kinase family. As to quaternary structure, interacts (via CBD domain) with clathrin. Interacts with AP-2 complex. Interacts with NUMB. Interacts with alpha-adaptin. Interacts with EPS15. Interacts with membrane-bound activated NOTCH1 but not with the inactive full-length form of NOTCH1. Preferentially interacts with monoubiquitinated activated NOTCH1 compared to the non-ubiquitinated form. Post-translationally, autophosphorylated.

Its subcellular location is the cell membrane. The protein localises to the membrane. It is found in the clathrin-coated pit. It localises to the presynapse. The catalysed reaction is L-seryl-[protein] + ATP = O-phospho-L-seryl-[protein] + ADP + H(+). It carries out the reaction L-threonyl-[protein] + ATP = O-phospho-L-threonyl-[protein] + ADP + H(+). With respect to regulation, stimulated by clathrin. Its function is as follows. Regulates clathrin-mediated endocytosis by phosphorylating the AP2M1/mu2 subunit of the adaptor protein complex 2 (AP-2) which ensures high affinity binding of AP-2 to cargo membrane proteins during the initial stages of endocytosis. Preferentially, may phosphorylate substrates on threonine residues. Regulates phosphorylation of other AP-2 subunits as well as AP-2 localization and AP-2-mediated internalization of ligand complexes. Phosphorylates NUMB and regulates its cellular localization, promoting NUMB localization to endosomes. Binds to and stabilizes the activated form of NOTCH1, increases its localization in endosomes and regulates its transcriptional activity. The protein is AP2-associated protein kinase 1 (Aak1) of Rattus norvegicus (Rat).